We begin with the raw amino-acid sequence, 482 residues long: E3 ubiquitin-protein ligase parkin (482 aa).

The Ubiquitin-like domain maps to 30 to 99 (LSIYVKTNTG…LGQQSVLHAI (70 aa)). A Phosphoserine; by Pink1 modification is found at S94. An RING-type 0; atypical zinc finger spans residues 157 to 246 (AHFFVHCSQC…SGGEKDFAAP (90 aa)). Residues C163, C166, C178, and C181 each contribute to the Zn(2+) site. T187 carries the phosphothreonine; by Pink1 modification. Residues C208, C232, H235, C259, C262, C274, H278, C281, C284, C310, C314, C353, C358, C373, C377, C382, C385, H390, C394, C436, and C439 each coordinate Zn(2+). The segment at 255 to 482 (KNVPCLACTD…RDCMGAHWFG (228 aa)) is TRIAD supradomain. The RING-type 1 zinc-finger motif lies at 259 to 314 (CLACTDVSDTVLVFPCASQHVTCIDCFRHYCRSRLGERQFMPHPDFGYTLPCPAGC). 2 IBR-type zinc fingers span residues 334–394 (DRYQ…IGEC) and 432–473 (STKP…EWTR). The RING-type 2; atypical zinc finger occupies 436 to 467 (CPKCRTPTERDGGCMHMVCTRAGCGFEWCWVC). The active site involves C449. Zn(2+)-binding residues include C454, C459, C464, C467, C475, and H479.

The protein belongs to the RBR family. Parkin subfamily. Forms an E3 ubiquitin ligase complex with E2 ubiquitin-conjugating enzymes. Interacts with Pink1. Interacts with Marf. Interacts with Paris. Interacts with septins Septin1 and pnut. Auto-ubiquitinates in an E2-dependent manner leading to its own degradation. In terms of processing, phosphorylated. Activation requires phosphorylation at Ser-94 by Pink1 and binding to Pink1-phosphorylated polyubiquitin chains. Phosphorylation at Thr-187 by Pink1 is also important for mitochondrial localization. In oocytes, accumulates in early egg chambers where it is enriched until stages 9-10, localizing mainly to the posterior pole and anterior margin (at protein level). After stage 10 it is no longer detected in the oocyte (at protein level). In embryos, ubiquitously expressed in the early stages (stages 2 to 5) (at protein level). Expression levels decrease at later stages and becomes restricted to the brain and nerve cord from stage 9 (at protein level). Relatively higher levels of expression in the head compared to the body. Enriched in the dorsomedial (DM) dopaminergic neurons.

The protein resides in the mitochondrion. It is found in the cytoplasm. Its subcellular location is the cytosol. The enzyme catalyses [E2 ubiquitin-conjugating enzyme]-S-ubiquitinyl-L-cysteine + [acceptor protein]-L-lysine = [E2 ubiquitin-conjugating enzyme]-L-cysteine + [acceptor protein]-N(6)-ubiquitinyl-L-lysine.. It functions in the pathway protein modification; protein ubiquitination. Its activity is regulated as follows. In the autoinhibited state the side chain of Phe-481 inserts into a hydrophobic groove in RING-0, occluding the ubiquitin acceptor site Cys-449, whereas the REP repressor element binds RING-1 and blocks its E2-binding site. Activation of park requires 2 steps: (1) phosphorylation at Ser-94 by Pink1 and (2) binding to phosphorylated ubiquitin, leading to unlock repression of the catalytic Cys-449 by the RING-0 region via an allosteric mechanism and converting park to its fully-active form. According to another report, phosphorylation at Ser-94 by Pink1 is not essential for activation and only binding to phosphorylated ubiquitin is essential to unlock repression. In terms of biological role, E3 ubiquitin-protein ligase which accepts ubiquitin from E2 ubiquitin-conjugating enzymes in the form of a thioester and then directly transfers the ubiquitin to targeted substrates, such as Paris, Marf, Opa1, Miro, pnut, Septin1, Tom20 and porin. Mediates monoubiquitination as well as 'Lys-6', 'Lys-11', 'Lys-48'-linked and 'Lys-63'-linked polyubiquitination of substrates, depending on the context. Protects against mitochondrial dysfunction during cellular stress, by acting downstream of Pink1, to coordinate mitochondrial quality control mechanisms that remove and replace dysfunctional mitochondrial components. Depending on the severity of mitochondrial damage and/or dysfunction, activity ranges from preventing apoptosis and stimulating mitochondrial biogenesis to regulating mitochondrial dynamics and eliminating severely damaged mitochondria via mitophagy. Appears to be particularly important in maintaining the physiology and function of cells with high energy demands that are undergoing stress or altered metabolic environment, including spermatids, muscle cells and neurons such as the dopaminergic (DA) neurons. Activation and recruitment onto the outer membrane of damaged/dysfunctional mitochondria (OMM) requires Pink1-mediated phosphorylation of both park and ubiquitin. In depolarized mitochondria, mediates the decision between mitophagy or preventing apoptosis by inducing either the poly- or monoubiquitination of porin/VDAC; polyubiquitination of porin promotes mitophagy, while monoubiquitination of porin decreases mitochondrial calcium influx which ultimately inhibits apoptosis. When cellular stress results in irreversible mitochondrial damage, promotes the autophagic degradation of dysfunctional depolarized mitochondria (mitophagy) by promoting the ubiquitination of mitochondrial proteins. Preferentially assembles 'Lys-6'-, 'Lys-11'- and 'Lys-63'-linked polyubiquitin chains following mitochondrial damage, leading to mitophagy. In developing tissues, inhibits JNK-mediated apoptosis by negatively regulating bsk transcription. The Pink1-park pathway also promotes fission and/or inhibits fusion of damaged mitochondria by mediating the ubiquitination and subsequent degradation of proteins involved in mitochondrial fusion/fission such as Marf, Opa1 and fzo. This prevents the refusion of unhealthy mitochondria with the healthy mitochondrial network and/or initiates mitochondrial fragmentation facilitating their later engulfment by autophagosomes. Regulates motility of damaged mitochondria by phosphorylating Miro which likely promotes its park-dependent degradation by the proteasome; in motor neurons, this inhibits mitochondrial intracellular anterograde transport along the axons which probably increases the chance of the mitochondria being eliminated in the soma. The Pink1-park pathway is also involved in mitochondrial regeneration processes such as promoting mitochondrial biogenesis, activating localized mitochondrial repair, promoting selective turnover of mitochondrial proteins and initiating the mitochondrial import of endogenous proteins. Involved in mitochondrial biogenesis via the ubiquitination of transcriptional repressor Paris which leads to its subsequent proteasomal degradation and allows activation of the transcription factor srl. Promotes localized mitochondrial repair by activating the translation of specific nuclear-encoded mitochondrial RNAs (nc-mtRNAs) on the mitochondrial surface, including several key electron transport chain component nc-mtRNAs. This is E3 ubiquitin-protein ligase parkin from Drosophila melanogaster (Fruit fly).